Reading from the N-terminus, the 289-residue chain is Splicing factor C9orf78 homolog (289 aa).

Disordered regions lie at residues 1 to 30 (MRIT…VRLK) and 85 to 111 (RGKD…RRDE). The interval 5–58 (GKTFRRRRADSESEEDEQESEEVRLKLEETREVQNLRKRPNGVSAAALLVGEKV) is interaction with SNRNP200. Ser-15 and Ser-17 each carry phosphoserine. The residue at position 147 (Tyr-147) is a Phosphotyrosine. A compositionally biased stretch (basic and acidic residues) spans 232 to 283 (LNAPIRRNKEEPKARPLRVGDTEKPEPERSPPNRKRPANEKATDDYHYEKFK). Positions 232-289 (LNAPIRRNKEEPKARPLRVGDTEKPEPERSPPNRKRPANEKATDDYHYEKFKKMNRRY) are disordered. Thr-253 carries the post-translational modification Phosphothreonine. Ser-261 carries the phosphoserine modification.

Belongs to the TLS1 family. In terms of assembly, component of the spliceosome. Interacts with SNRNP200; the interaction is direct. Interacts with PRPF8.

The protein resides in the nucleus. It localises to the chromosome. Its subcellular location is the centromere. Functionally, plays a role in pre-mRNA splicing by promoting usage of the upstream 3'-splice site at alternative NAGNAG splice sites; these are sites featuring alternative acceptor motifs separated by only a few nucleotides. May also modulate exon inclusion events. PPlays a role in spliceosomal remodeling by displacing WBP4 from SNRNP200 and may act to inhibit SNRNP200 helicase activity. Binds U5 snRNA. Required for proper chromosome segregation. Not required for splicing of shelterin components. In Mus musculus (Mouse), this protein is Splicing factor C9orf78 homolog.